A 340-amino-acid chain; its full sequence is Guanine nucleotide-binding protein subunit beta-1 (340 aa).

7 WD repeats span residues 53 to 83 (GHLA…IVWD), 95 to 125 (LRSS…SIYS), 141 to 170 (GHTG…ALWD), 182 to 212 (GHTG…KLWD), 224 to 254 (GHES…RLFD), 268 to 298 (NIIC…NVWD), and 310 to 340 (GHDN…KIWN).

It belongs to the WD repeat G protein beta family. G proteins are composed of 3 units, alpha, beta and gamma. Interacts with G protein gamma subunits gpc-1 and gpc-2 and with egl-10 and eat-16. Interacts with goa-1 (in GDP-bound form).

Its function is as follows. Guanine nucleotide-binding proteins (G proteins) are involved as a modulator or transducer in various transmembrane signaling systems. The beta and gamma chains are required for the GTPase activity, for replacement of GDP by GTP, and for G protein-effector interaction. In the early embryo, controls the magnitude of the forces acting on centrosomes but is not required for generating asymmetric forces. The protein is Guanine nucleotide-binding protein subunit beta-1 (gpb-1) of Caenorhabditis briggsae.